A 254-amino-acid chain; its full sequence is MCSCLVVKNTVIGSGRTKIAVPLVARDAAELSAVLEQIKNMPFDIAEFRADFLECAGSIGEILHHTQTVRDALPDKPLLFTFRRHGEGGSFPCSDDYYFKLLDALIESRLPDIIDIELFSGETAVRRAVANAQKNGIAALLCNHEFHRTPPQEEIVCRLKQMEDCGADICKIAVMPQSAEDVLTLLSATLKAKELAAKPIVTMSMGQTGAVSRLAGQVFGSSITFGSGTQNSAPGQIGVSALRATLDCLENGAD.

3-dehydroquinate-binding positions include 47–49 and Arg83; that span reads EFR. His144 (proton donor/acceptor) is an active-site residue. The Schiff-base intermediate with substrate role is filled by Lys171. Residues Arg213, Ser232, and Gln236 each coordinate 3-dehydroquinate.

The protein belongs to the type-I 3-dehydroquinase family. Homodimer.

The enzyme catalyses 3-dehydroquinate = 3-dehydroshikimate + H2O. It functions in the pathway metabolic intermediate biosynthesis; chorismate biosynthesis; chorismate from D-erythrose 4-phosphate and phosphoenolpyruvate: step 3/7. Involved in the third step of the chorismate pathway, which leads to the biosynthesis of aromatic amino acids. Catalyzes the cis-dehydration of 3-dehydroquinate (DHQ) and introduces the first double bond of the aromatic ring to yield 3-dehydroshikimate. The polypeptide is 3-dehydroquinate dehydratase (Neisseria meningitidis serogroup C / serotype 2a (strain ATCC 700532 / DSM 15464 / FAM18)).